Reading from the N-terminus, the 89-residue chain is MSLSTEAKAKILAEFGRGENDTGSTEVQVALLTAQINHLQDHFKEHIHDHHSRRGLLRMVSARRKLTAYLKRTDAERYTALIQKLGLRR.

It belongs to the universal ribosomal protein uS15 family. As to quaternary structure, part of the 30S ribosomal subunit. Forms a bridge to the 50S subunit in the 70S ribosome, contacting the 23S rRNA.

Its function is as follows. One of the primary rRNA binding proteins, it binds directly to 16S rRNA where it helps nucleate assembly of the platform of the 30S subunit by binding and bridging several RNA helices of the 16S rRNA. Functionally, forms an intersubunit bridge (bridge B4) with the 23S rRNA of the 50S subunit in the ribosome. This Shewanella putrefaciens (strain CN-32 / ATCC BAA-453) protein is Small ribosomal subunit protein uS15.